The sequence spans 208 residues: UPF0637 protein lp_2332 (208 aa).

This sequence belongs to the UPF0637 family.

This is UPF0637 protein lp_2332 from Lactiplantibacillus plantarum (strain ATCC BAA-793 / NCIMB 8826 / WCFS1) (Lactobacillus plantarum).